A 207-amino-acid polypeptide reads, in one-letter code: Venom allergen 5 (207 aa).

Intrachain disulfides connect C4–C16, C8–C105, and C29–C97. The region spanning 49–192 is the SCP domain; sequence DEHNRFRQKV…MKSHYLVCNY (144 aa). A Phosphotyrosine modification is found at Y111. K141 carries N-linked (Glc) (glycation) lysine glycosylation. The cysteines at positions 173 and 190 are disulfide-linked.

The protein belongs to the CRISP family. Venom allergen 5-like subfamily. In terms of processing, glycosylated. Expressed by the venom gland.

It is found in the secreted. The chain is Venom allergen 5 from Polybia paulista (Neotropical social wasp).